Reading from the N-terminus, the 235-residue chain is Uridylate kinase (235 aa).

9 to 12 serves as a coordination point for ATP; the sequence is KLSG. Position 51 (G51) interacts with UMP. G52 and R56 together coordinate ATP. UMP is bound by residues D71 and 132–139; that span reads TGNPYFTT. Positions 159, 165, and 168 each coordinate ATP.

The protein belongs to the UMP kinase family. In terms of assembly, homohexamer.

It localises to the cytoplasm. It carries out the reaction UMP + ATP = UDP + ADP. It functions in the pathway pyrimidine metabolism; CTP biosynthesis via de novo pathway; UDP from UMP (UMPK route): step 1/1. Inhibited by UTP. Its function is as follows. Catalyzes the reversible phosphorylation of UMP to UDP. The chain is Uridylate kinase from Flavobacterium psychrophilum (strain ATCC 49511 / DSM 21280 / CIP 103535 / JIP02/86).